The sequence spans 296 residues: MSKVKLSGIFTALITPFKNDFSIDEDTFSKLIEHQISNNIHGLVPCGTTGEYSTLSFEEYCRVIELCVKVTNKRVPIIAGSGSNCTQETIKRTLYVQSLNVDAALVVVPYYNRPSDEGIFQHFKAVHDATDVPIIIYNIPQRTAIDPNDVLLARILSLPRIIGIKDATGDVSRPLNLKLLIDKEFALFTGNDATSLGFYAQGGGTGCISAVSNVIPKIYSDMHNAFFAHNIKEAMDANASIFKLSKVLFCQSNPSPTKYAMSLIKGISPTVRLPLVELTQENKLKVENMLKELNLI.

Position 49 (threonine 49) interacts with pyruvate. The active-site Proton donor/acceptor is the tyrosine 137. The active-site Schiff-base intermediate with substrate is lysine 165. Pyruvate is bound at residue isoleucine 208.

This sequence belongs to the DapA family. In terms of assembly, homotetramer; dimer of dimers.

The protein resides in the cytoplasm. The enzyme catalyses L-aspartate 4-semialdehyde + pyruvate = (2S,4S)-4-hydroxy-2,3,4,5-tetrahydrodipicolinate + H2O + H(+). Its pathway is amino-acid biosynthesis; L-lysine biosynthesis via DAP pathway; (S)-tetrahydrodipicolinate from L-aspartate: step 3/4. Catalyzes the condensation of (S)-aspartate-beta-semialdehyde [(S)-ASA] and pyruvate to 4-hydroxy-tetrahydrodipicolinate (HTPA). The chain is 4-hydroxy-tetrahydrodipicolinate synthase from Ehrlichia canis (strain Jake).